A 662-amino-acid chain; its full sequence is Histone-lysine N-methyltransferase SET9 (662 aa).

In terms of domain architecture, SET spans 114 to 228 (CPFEVTTTNR…EGDEITVSYG (115 aa)). 2 disordered regions span residues 252 to 418 (WAPM…DEHH) and 627 to 662 (ESIR…RKTM). A compositionally biased stretch (acidic residues) spans 260-271 (DSDDEDMEEAES). Residues 279–289 (ATSSGTATSGG) are compositionally biased toward low complexity. Positions 323–333 (RASDHLREATL) are enriched in basic and acidic residues. 3 stretches are compositionally biased toward polar residues: residues 356-370 (ANIN…QDIR), 382-395 (LDET…TPQS), and 402-411 (PKSSHSTDAT). The span at 627 to 640 (ESIRERFSTPRSGR) shows a compositional bias: basic and acidic residues. The span at 653–662 (RKRRRVRKTM) shows a compositional bias: basic residues.

The protein belongs to the class V-like SAM-binding methyltransferase superfamily. Histone-lysine methyltransferase family. Suvar4-20 subfamily.

Its subcellular location is the nucleus. It is found in the chromosome. The enzyme catalyses L-lysyl(20)-[histone H4] + 3 S-adenosyl-L-methionine = N(6),N(6),N(6)-trimethyl-L-lysyl(20)-[histone H4] + 3 S-adenosyl-L-homocysteine + 3 H(+). Functionally, histone methyltransferase that trimethylates 'Lys-20' of histone H4 to form H4K20me3. The chain is Histone-lysine N-methyltransferase SET9 (SET9) from Phaeosphaeria nodorum (strain SN15 / ATCC MYA-4574 / FGSC 10173) (Glume blotch fungus).